Here is a 207-residue protein sequence, read N- to C-terminus: Small ribosomal subunit protein uS4 (207 aa).

Residues 32–55 form a disordered region; the sequence is CKLDSKPGQHGRTSGARTSDYGTQ. Residues 42 to 53 show a composition bias toward polar residues; the sequence is GRTSGARTSDYG. Residues 97–158 form the S4 RNA-binding domain; sequence SRLDNVVYRM…TKKKQARILE (62 aa).

The protein belongs to the universal ribosomal protein uS4 family. As to quaternary structure, part of the 30S ribosomal subunit. Contacts protein S5. The interaction surface between S4 and S5 is involved in control of translational fidelity.

Functionally, one of the primary rRNA binding proteins, it binds directly to 16S rRNA where it nucleates assembly of the body of the 30S subunit. In terms of biological role, with S5 and S12 plays an important role in translational accuracy. This Paraburkholderia phytofirmans (strain DSM 17436 / LMG 22146 / PsJN) (Burkholderia phytofirmans) protein is Small ribosomal subunit protein uS4.